The sequence spans 157 residues: MSKVKNIAVVAHDNCKKELLDFVDCNHNILSRHNLVATGTTGGLVEKMIMERVEQKADEGYEFKPVNRMKSGPLGGDQQLGAMISEGKIDVLIFFWDPMQPQPHDVDVKALLRLAVLYNIPTASNRSTAEFLISSPFFEGEFQRKETDFSSYTQRKL.

Residues 1 to 157 (MSKVKNIAVV…DFSSYTQRKL (157 aa)) enclose the MGS-like domain. Residues histidine 12, lysine 16, 38 to 41 (TGTT), and 71 to 72 (SG) each bind substrate. Catalysis depends on aspartate 77, which acts as the Proton donor/acceptor. Histidine 104 contacts substrate.

It belongs to the methylglyoxal synthase family.

It carries out the reaction dihydroxyacetone phosphate = methylglyoxal + phosphate. Its function is as follows. Catalyzes the formation of methylglyoxal from dihydroxyacetone phosphate. The sequence is that of Methylglyoxal synthase from Maridesulfovibrio salexigens (strain ATCC 14822 / DSM 2638 / NCIMB 8403 / VKM B-1763) (Desulfovibrio salexigens).